A 420-amino-acid chain; its full sequence is Carboxypeptidase A4 (420 aa).

The N-terminal stretch at 1–16 (MKWLLFFGALIGAGIC) is a signal peptide. Positions 17 to 113 (GRDKFFGDQV…EMQHNEGIER (97 aa)) are cleaved as a propeptide — activation peptide. Pro-69, Val-71, Asn-118, Tyr-122, His-123, Glu-126, and Phe-162 together coordinate a protein. Residues 121–415 (AYHPLEAIYH…LGLKTIMEHV (295 aa)) form the Peptidase M14 domain. Zn(2+) is bound by residues His-180 and Glu-183. Cys-249 and Cys-272 are joined by a disulfide. The N-linked (GlcNAc...) asparagine glycan is linked to Asn-259. His-307 is a binding site for Zn(2+). The Proton donor/acceptor role is filled by Glu-381.

This sequence belongs to the peptidase M14 family. In terms of assembly, interacts with LXN. Zn(2+) serves as cofactor.

The protein localises to the secreted. In terms of biological role, metalloprotease that cleaves hydrophobic C-terminal residues with a preference for -Phe, -Leu, -Ile, -Met, -Tyr and -Val. May function in peptide hormone and/or neuropeptide catabolism. This chain is Carboxypeptidase A4 (Cpa4), found in Mus musculus (Mouse).